Consider the following 228-residue polypeptide: Derlin-3 (228 aa).

Topologically, residues 1–22 (MAGQRLAAGFLQVPAVTRAYTA) are cytoplasmic. The chain crosses the membrane as a helical span at residues 23–43 (ACVLTTAAVQLELLSPFQLYF). Residues 44-57 (NPHLVFRKFQVWRL) lie on the Lumenal side of the membrane. A helical transmembrane segment spans residues 58-78 (ITTFLFFGPLGFGFFFNMLFV). The Cytoplasmic portion of the chain corresponds to 79–98 (FRYCRMLEEGSFRGRKADFV). Residues 99 to 119 (FMFLFGGVLMTLLGFLGSLFF) traverse the membrane as a helical segment. Over 120–168 (LGQALMAMLVYVWSRRSPHVRVNFFGLLNFQAPFLPWALMGFSLLLGNS) the chain is Lumenal. A helical membrane pass occupies residues 169 to 189 (VVTDLLGILVGHIYYFLEDVF). At 190 to 228 (PNQPGGKRLLLTPSVLKLLLDDPQEDPDYLPLPEEQPEL) the chain is on the cytoplasmic side.

Belongs to the derlin family. In terms of assembly, forms homo- and heterooligomers with DERL2 and, to a lesser extent, with DERL1. Interacts with VCP and EDEM1. Interacts with SELENOK and SELENOS. Interacts with the signal recognition particle/SRP and the SRP receptor; in the process of endoplasmic reticulum stress-induced pre-emptive quality control. Highly expressed in spleen, lung, liver, spleen and testis. Expressed at intermediate level in kidney. Weakly or not expressed in brain, heart and skeletal muscle.

The protein resides in the endoplasmic reticulum membrane. In terms of biological role, functional component of endoplasmic reticulum-associated degradation (ERAD) for misfolded lumenal glycoproteins, but not that of misfolded nonglycoproteins. May act by forming a channel that allows the retrotranslocation of misfolded glycoproteins into the cytosol where they are ubiquitinated and degraded by the proteasome. May mediate the interaction between VCP and the misfolded glycoproteins. May be involved in endoplasmic reticulum stress-induced pre-emptive quality control, a mechanism that selectively attenuates the translocation of newly synthesized proteins into the endoplasmic reticulum and reroutes them to the cytosol for proteasomal degradation. In Mus musculus (Mouse), this protein is Derlin-3.